A 423-amino-acid chain; its full sequence is Serine--tRNA ligase (423 aa).

231–233 lines the L-serine pocket; that stretch reads TAE. ATP is bound at residue 262 to 264; the sequence is RSE. Position 285 (Glu-285) interacts with L-serine. 349-352 contributes to the ATP binding site; the sequence is EISS. Residue Ser-384 coordinates L-serine.

Belongs to the class-II aminoacyl-tRNA synthetase family. Type-1 seryl-tRNA synthetase subfamily. In terms of assembly, homodimer. The tRNA molecule binds across the dimer.

The protein resides in the cytoplasm. It carries out the reaction tRNA(Ser) + L-serine + ATP = L-seryl-tRNA(Ser) + AMP + diphosphate + H(+). The enzyme catalyses tRNA(Sec) + L-serine + ATP = L-seryl-tRNA(Sec) + AMP + diphosphate + H(+). Its pathway is aminoacyl-tRNA biosynthesis; selenocysteinyl-tRNA(Sec) biosynthesis; L-seryl-tRNA(Sec) from L-serine and tRNA(Sec): step 1/1. Its function is as follows. Catalyzes the attachment of serine to tRNA(Ser). Is also able to aminoacylate tRNA(Sec) with serine, to form the misacylated tRNA L-seryl-tRNA(Sec), which will be further converted into selenocysteinyl-tRNA(Sec). The polypeptide is Serine--tRNA ligase (Acinetobacter baumannii (strain AB307-0294)).